The chain runs to 534 residues: Low affinity inorganic phosphate transporter 1 (534 aa).

Residues 1–23 (MAKDLQVLTALDVAKTQLYHFTA) lie on the Cytoplasmic side of the membrane. The chain crosses the membrane as a helical span at residues 24 to 44 (IVIAGMGFFTDAYDLFCISLV). Over 45 to 69 (TKLLGRIYYHHEGALKPGSLPPNVA) the chain is Extracellular. A helical transmembrane segment spans residues 70-90 (AAVNGVAFCGTLAGQLFFGWL). Residues 91–98 (GDKLGRKK) are Cytoplasmic-facing. The chain crosses the membrane as a helical span at residues 99–119 (VYGMTLMLMVICSIASGLSFG). Over 120-124 (HTPKS) the chain is Extracellular. A helical transmembrane segment spans residues 125–145 (VMATLCFFRFWLGFGIGGDYP). Residues 146 to 163 (LSATIMSEYANKKTRGAF) lie on the Cytoplasmic side of the membrane. The helical transmembrane segment at 164–184 (IAAVFAMQGFGILAGGMVAII) threads the bilayer. Over 185–210 (VSAAFKNQFPAPAYKDGALASTISQA) the chain is Extracellular. The chain crosses the membrane as a helical span at residues 211-231 (DFVWRIIVMFGAIPTALTYYW). Topologically, residues 232 to 290 (RMKMPETARYTALVAKNLKQATNDMSKVLQVEIEPEQEKVEEISQGNDFGLFTKQFLRR) are cytoplasmic. Residues 291–311 (HGLHLLGTASTWFLLDIAFYS) form a helical membrane-spanning segment. Residues 312–343 (QNLFQKDIFSAIGWIPPAETMNALEEVYRIAR) lie on the Extracellular side of the membrane. A helical transmembrane segment spans residues 344 to 364 (AQTLIALCSTVPGYWFTVAFI). Topologically, residues 365 to 369 (DKIGR) are cytoplasmic. A helical membrane pass occupies residues 370–390 (FAIQLMGFFFMTVFMFALAIP). Residues 391-400 (YTHWTHKDNR) lie on the Extracellular side of the membrane. A helical transmembrane segment spans residues 401 to 421 (IGFVIMYSLTFFFANFGPNAT). Residues 422–440 (TFVVPAEIFPARLRSTCHG) are Cytoplasmic-facing. The chain crosses the membrane as a helical span at residues 441 to 461 (ISAAAGKAGAMVGAFGFLYAA). Topologically, residues 462-481 (QSTDPKKTDAGYPAGIGVRN) are extracellular. The helical transmembrane segment at 482-502 (SLIVLGCVNFLGMLFTLLVPE) threads the bilayer. Topologically, residues 503-534 (SKGKSLEEMSRENEGEDENGTEMRASGRTVPV) are cytoplasmic. Positions 507 to 534 (SLEEMSRENEGEDENGTEMRASGRTVPV) are disordered.

It belongs to the major facilitator superfamily. Phosphate:H(+) symporter (TC 2.A.1.9) family.

It is found in the cell membrane. It carries out the reaction phosphate(in) + H(+)(in) = phosphate(out) + H(+)(out). Functionally, low-affinity transporter for external inorganic phosphate (Pi). Involved in phosphorus (P) remobilization from dying to developing tissues during corolla senescence in an ethylene-dependent manner. The protein is Low affinity inorganic phosphate transporter 1 of Petunia hybrida (Petunia).